Reading from the N-terminus, the 340-residue chain is Glyceraldehyde-3-phosphate dehydrogenase (340 aa).

NAD(+) is bound by residues 11 to 12 (TI) and glycine 109. An intrachain disulfide couples cysteine 123 to cysteine 149. 138–140 (SCN) lines the D-glyceraldehyde 3-phosphate pocket. The Nucleophile role is filled by cysteine 139. NAD(+) is bound at residue arginine 167. 193–194 (HA) contacts D-glyceraldehyde 3-phosphate. Glutamine 300 is a binding site for NAD(+).

Belongs to the glyceraldehyde-3-phosphate dehydrogenase family. Homotetramer.

The protein resides in the cytoplasm. The catalysed reaction is D-glyceraldehyde 3-phosphate + phosphate + NADP(+) = (2R)-3-phospho-glyceroyl phosphate + NADPH + H(+). The enzyme catalyses D-glyceraldehyde 3-phosphate + phosphate + NAD(+) = (2R)-3-phospho-glyceroyl phosphate + NADH + H(+). It participates in carbohydrate degradation; glycolysis; pyruvate from D-glyceraldehyde 3-phosphate: step 1/5. Functionally, can use both NAD and NADP as cofactors, but exhibits a marked preference for NADP. The polypeptide is Glyceraldehyde-3-phosphate dehydrogenase (gap) (Saccharolobus solfataricus (strain ATCC 35092 / DSM 1617 / JCM 11322 / P2) (Sulfolobus solfataricus)).